The primary structure comprises 66 residues: MKQGIHPAYKKVIVRCACGNEFESGSVKDELRVEICSECHPFFTGKQKFVSAAGRVDKFNKKYGLK.

Zn(2+)-binding residues include Cys-16, Cys-18, Cys-36, and Cys-39.

Belongs to the bacterial ribosomal protein bL31 family. Type A subfamily. Part of the 50S ribosomal subunit. Zn(2+) is required as a cofactor.

Its function is as follows. Binds the 23S rRNA. This Geobacillus thermodenitrificans (strain NG80-2) protein is Large ribosomal subunit protein bL31.